The chain runs to 718 residues: Scarecrow-like protein 9 (718 aa).

The interval 305–338 (VEKKKASDAQGGKRRARGRGRGRGRGGGGGQNGK) is disordered. Over residues 316–328 (GKRRARGRGRGRG) the composition is skewed to basic residues. The GRAS domain occupies 335–713 (QNGKKEVVDL…RTVMALSVWK (379 aa)). The tract at residues 342–402 (VDLRSLLIHC…EARLAGTGSQ (61 aa)) is leucine repeat I (LRI). Positions 421-484 (HQLFLACCPF…YGSPKVRITG (64 aa)) are VHIID. The short motif at 452–456 (VHVID) is the VHIID element. A leucine repeat II (LRII) region spans residues 500–532 (ETGQRLAAYAKLFGVPFEYKAIAKKWDAIQLED). The segment at 541-635 (TVVNCLYRAE…MEVFGREALN (95 aa)) is PFYRE. The tract at residues 638-713 (ACEGWERVER…RTVMALSVWK (76 aa)) is SAW.

It belongs to the GRAS family. As to expression, expressed in cotyledons, leaves and flowers, and in the elongation zone in root.

The protein resides in the nucleus. Probable transcription factor involved in plant development. This Arabidopsis thaliana (Mouse-ear cress) protein is Scarecrow-like protein 9 (SCL9).